The sequence spans 337 residues: Probable cytosolic iron-sulfur protein assembly protein Ciao1 (337 aa).

7 WD repeats span residues 12–51 (GHRGRAWGAGWHPKGNVLATCGEDKTIRIWAEDASQRWVA), 58–97 (GHSRTIRDVAWSPCGQYLASASFDATVAIWDKKSGEFECN), 102–141 (GHENEVKSVSWSKSGSLLATCSRDKSVWVWEVAQEDEYEC), 147–186 (THTQDVKKVEWHPHEDILASASYDNTIKLYKEDLADSDWS), 193–232 (SHESTVWSISFDGSGNRLASCSDDQTVKIWQEYKPGNEFG), 251–290 (YHSRSVYDISWCKQSGLLATACGDDMVRIFKEVEGSSPHE), and 301–337 (AHSQDVNTVEWNPTVVGLLVTTSDDGDVKLWKYEPEE).

Belongs to the WD repeat CIA1 family.

Its function is as follows. Essential component of the cytosolic iron-sulfur (Fe/S) protein assembly machinery. Required for the maturation of extramitochondrial Fe/S proteins. This is Probable cytosolic iron-sulfur protein assembly protein Ciao1 from Aedes aegypti (Yellowfever mosquito).